The primary structure comprises 514 residues: Ubiquitin carboxyl-terminal hydrolase 22 (514 aa).

Residues 10–127 form a UBP-type zinc finger; it reads PGCAHLGSFK…KEEQRKAWKM (118 aa). Zn(2+) contacts are provided by cysteine 12, histidine 14, cysteine 52, cysteine 55, cysteine 65, cysteine 68, cysteine 73, histidine 78, histidine 82, histidine 88, cysteine 101, and cysteine 104. Lysine 118 bears the N6-acetyllysine mark. At threonine 136 the chain carries Phosphothreonine. A USP domain is found at 165–509; that stretch reads RGLINLGNTC…EGYLLFYHKQ (345 aa). Cysteine 174 acts as the Nucleophile in catalysis. Serine 226 is subject to Phosphoserine. The active-site Proton acceptor is histidine 468.

The protein belongs to the peptidase C19 family. UBP8 subfamily. In terms of assembly, component of some SAGA transcription coactivator-HAT complexes, at least composed of ATXN7, ATXN7L3, ENY2, GCN5L2, SUPT3H, TAF10, TRRAP and USP22. Within the SAGA complex, ATXN7L3, ENY2 and USP22 form a subcomplex required for histone deubiquitination. Interacts directly with ATXN7L3; leading to its recruitment to the SAGA complex. Interacts with ATXN7L3 and weakly with ATXN7L3B. Interacts with MED1. In terms of processing, phosphorylated in G2/M phase, but not in G1 phase by CDK1. Post-translationally, ubiquitinated and subsequently degraded in a CDC20-dependent manner.

It is found in the nucleus. The protein localises to the cytoplasm. The enzyme catalyses Thiol-dependent hydrolysis of ester, thioester, amide, peptide and isopeptide bonds formed by the C-terminal Gly of ubiquitin (a 76-residue protein attached to proteins as an intracellular targeting signal).. In terms of biological role, deubiquitinase that plays a role in several cellular processes including transcriptional regulation, cell cycle progression or innate immunity. As part of the transcription regulatory histone acetylation (HAT) complex SAGA, catalyzes the deubiquitination of both histones H2A and H2B, thereby acting as a transcriptional coactivator. Recruited to specific gene promoters by activators such as MYC, where it is required for transcription. Facilitates cell-cycle progression by stabilizing CCNB1 and antagonizing its proteasome-mediated degradation in a cell cycle-specific manner. Modulates cell cycle progression and apoptosis also by antagonizing TP53 transcriptional activation through deacetylase SIRT1 stabilization. Plays multiple roles in immunity and inflammation. Participates in antiviral response by deubiquitinating the importin KPNA2, leading to IRF3 nuclear translocation and subsequent type I interferon production. Acts as a central regulator of type III IFN signaling by negatively regulating STING1 activation and ubiquitination. Inhibits NLRP3 inflammasome activation by promoting NLRP3 degradation through ATG5-dependent autophagy. Deubiquitinates CD274 to induce its stabilization and thereby participates in maintenance of immune tolerance to self. Controls necroptotic cell death by regulating RIPK3 phosphorylation and ubiquitination. During bacterial infection, promotes pro-inflammatory response by targeting TRAF6 and removing its 'Lys-48'-linked polyubiquitination. The chain is Ubiquitin carboxyl-terminal hydrolase 22 (USP22) from Bos taurus (Bovine).